Here is a 466-residue protein sequence, read N- to C-terminus: MTIRLYDTSARQIRDFTPLLPGCVSIYLCGATVQAAPHIGHIRSGLNFDIMRRWFEYRGYDVTFIRNVTDIDDKIIAKSADHGRPWWAIGYENERAFNDGYDVLGCLPPTYEPRATGHITEMVEMMRTLIERGHAYEADGNVYFDVRSFPEYLQLSNQELDNLLQPSGEGETGKRDPRDFAMWKAAKPGEPTWETPWGRGRPGWHLECSAMAHKYLGSAFDIHGGGLDLIFPHHENEIAQAKAFGDEFARYWVHNAWVTMSGEKMSKSLGNSVLVSEMVKQWRPIVLRYYLGTPHYRSMIEYSEEALREAESAFARIEGFVQRVVEKAGGVVEPSPEVPPAFAEAMDDDLGVPQALAIVHTTVRQGNSALAADDKEAAVARLAEVRAMLGVLGLDPLDPQWAGEGDRGEDLHGVVDTLVRMVLDQREAARARKDWATADAIRDQLNQSGLVIEDSPQGPRWTLGPR.

C29 serves as a coordination point for Zn(2+). Residues 31-41 (ATVQAAPHIGH) carry the 'HIGH' region motif. C208, H233, and E237 together coordinate Zn(2+). Positions 264–268 (KMSKS) match the 'KMSKS' region motif. K267 provides a ligand contact to ATP.

This sequence belongs to the class-I aminoacyl-tRNA synthetase family. In terms of assembly, monomer. Zn(2+) serves as cofactor.

It is found in the cytoplasm. It catalyses the reaction tRNA(Cys) + L-cysteine + ATP = L-cysteinyl-tRNA(Cys) + AMP + diphosphate. The protein is Cysteine--tRNA ligase of Streptomyces avermitilis (strain ATCC 31267 / DSM 46492 / JCM 5070 / NBRC 14893 / NCIMB 12804 / NRRL 8165 / MA-4680).